The following is a 346-amino-acid chain: Fe(3+) ions import ATP-binding protein FbpC 2 (346 aa).

The region spanning 2-234 is the ABC transporter domain; the sequence is LELHRVSKSF…PNSEDIATFL (233 aa). Residue 34–41 participates in ATP binding; sequence GPSGSGKT.

Belongs to the ABC transporter superfamily. Fe(3+) ion importer (TC 3.A.1.10) family. In terms of assembly, the complex is composed of two ATP-binding proteins (FbpC), two transmembrane proteins (FbpB) and a solute-binding protein (FbpA).

It localises to the cell inner membrane. It catalyses the reaction Fe(3+)(out) + ATP + H2O = Fe(3+)(in) + ADP + phosphate + H(+). Part of the ABC transporter complex FbpABC involved in Fe(3+) ions import. Responsible for energy coupling to the transport system. The polypeptide is Fe(3+) ions import ATP-binding protein FbpC 2 (Pectobacterium atrosepticum (strain SCRI 1043 / ATCC BAA-672) (Erwinia carotovora subsp. atroseptica)).